The sequence spans 428 residues: 3-phosphoshikimate 1-carboxyvinyltransferase (428 aa).

Residues lysine 22, serine 23, and arginine 27 each coordinate 3-phosphoshikimate. Residue lysine 22 coordinates phosphoenolpyruvate. Phosphoenolpyruvate is bound by residues glycine 96 and arginine 124. 3-phosphoshikimate-binding residues include serine 169, serine 170, glutamine 171, serine 197, aspartate 313, asparagine 336, and lysine 340. Position 171 (glutamine 171) interacts with phosphoenolpyruvate. Aspartate 313 serves as the catalytic Proton acceptor. Phosphoenolpyruvate is bound by residues arginine 344, arginine 386, and lysine 411.

It belongs to the EPSP synthase family. As to quaternary structure, monomer.

The protein localises to the cytoplasm. The catalysed reaction is 3-phosphoshikimate + phosphoenolpyruvate = 5-O-(1-carboxyvinyl)-3-phosphoshikimate + phosphate. It functions in the pathway metabolic intermediate biosynthesis; chorismate biosynthesis; chorismate from D-erythrose 4-phosphate and phosphoenolpyruvate: step 6/7. Functionally, catalyzes the transfer of the enolpyruvyl moiety of phosphoenolpyruvate (PEP) to the 5-hydroxyl of shikimate-3-phosphate (S3P) to produce enolpyruvyl shikimate-3-phosphate and inorganic phosphate. This is 3-phosphoshikimate 1-carboxyvinyltransferase from Proteus mirabilis (strain HI4320).